The sequence spans 329 residues: Methionyl-tRNA formyltransferase (329 aa).

Residue 118–121 (SLLP) participates in (6S)-5,6,7,8-tetrahydrofolate binding.

It belongs to the Fmt family.

The catalysed reaction is L-methionyl-tRNA(fMet) + (6R)-10-formyltetrahydrofolate = N-formyl-L-methionyl-tRNA(fMet) + (6S)-5,6,7,8-tetrahydrofolate + H(+). Functionally, attaches a formyl group to the free amino group of methionyl-tRNA(fMet). The formyl group appears to play a dual role in the initiator identity of N-formylmethionyl-tRNA by promoting its recognition by IF2 and preventing the misappropriation of this tRNA by the elongation apparatus. This Corynebacterium urealyticum (strain ATCC 43042 / DSM 7109) protein is Methionyl-tRNA formyltransferase.